A 269-amino-acid polypeptide reads, in one-letter code: Probable ribosomal RNA small subunit methyltransferase A (269 aa).

His-19, Leu-21, Gly-46, Glu-67, Asp-92, and Asn-107 together coordinate S-adenosyl-L-methionine.

Belongs to the class I-like SAM-binding methyltransferase superfamily. rRNA adenine N(6)-methyltransferase family. RsmA subfamily.

Its subcellular location is the cytoplasm. Specifically dimethylates two adjacent adenosines in the loop of a conserved hairpin near the 3'-end of 16S rRNA in the 30S particle. May play a critical role in biogenesis of 30S subunits. The sequence is that of Probable ribosomal RNA small subunit methyltransferase A from Methanosarcina acetivorans (strain ATCC 35395 / DSM 2834 / JCM 12185 / C2A).